A 398-amino-acid chain; its full sequence is Phytoene synthase 2, chloroplastic (398 aa).

The N-terminal 80 residues, Met1–Arg80, are a transit peptide targeting the chloroplast.

Belongs to the phytoene/squalene synthase family. Expressed in leaves and endosperm. Expressed in developing leaves.

The protein resides in the plastid. It localises to the chloroplast membrane. It is found in the chloroplast. Its subcellular location is the plastoglobule. The enzyme catalyses 2 (2E,6E,10E)-geranylgeranyl diphosphate = 15-cis-phytoene + 2 diphosphate. Catalyzes the conversion of geranylgeranyl diphosphate to phytoene. Mediates the first committed step in carotenoid biosynthesis. The polypeptide is Phytoene synthase 2, chloroplastic (Oryza sativa subsp. japonica (Rice)).